A 473-amino-acid polypeptide reads, in one-letter code: L-seryl-tRNA(Sec) selenium transferase (473 aa).

K302 bears the N6-(pyridoxal phosphate)lysine mark.

This sequence belongs to the SelA family. The cofactor is pyridoxal 5'-phosphate.

The protein localises to the cytoplasm. The enzyme catalyses L-seryl-tRNA(Sec) + selenophosphate + H(+) = L-selenocysteinyl-tRNA(Sec) + phosphate. It functions in the pathway aminoacyl-tRNA biosynthesis; selenocysteinyl-tRNA(Sec) biosynthesis; selenocysteinyl-tRNA(Sec) from L-seryl-tRNA(Sec) (bacterial route): step 1/1. Converts seryl-tRNA(Sec) to selenocysteinyl-tRNA(Sec) required for selenoprotein biosynthesis. In Shewanella oneidensis (strain ATCC 700550 / JCM 31522 / CIP 106686 / LMG 19005 / NCIMB 14063 / MR-1), this protein is L-seryl-tRNA(Sec) selenium transferase.